A 283-amino-acid chain; its full sequence is Circadian clock oscillator protein KaiA (283 aa).

The interval 1-146 (MAQSTALTIC…LFRLPALKES (146 aa)) is psR domain, not required to form KaiA:KaiB:KaiC complex, or for a full KaiC phosphorylation cycle. In terms of domain architecture, KaiA N-terminal spans 3–163 (QSTALTICGL…RLSQKLKERL (161 aa)). Residues 164–172 (GYLGVYYKR) are flexible linker. Residues 173 to 281 (DTAFFFRRMS…CEMYRRSIPR (109 aa)) enclose the KaiA C-terminal domain.

It belongs to the KaiA family. As to quaternary structure, homodimer. The KaiABC complex composition changes during the circadian cycle to control KaiC phosphorylation. Complexes KaiC(6), KaiA(2-4):KaiC(6), KaiB(6):KaiC(6) and KaiC(6):KaiB(6):KaiA(12) are among the most important forms, many form cooperatively. Binds to KaiB and KaiC, the N-terminus (pseudoreceiver domain PsR) is not required for either interaction. 1 KaiB binds to one subunit of the KaiA homodimer. KaiA and CikA bind to the same region of the KaiB(fs) form and therefore compete.

Key component of the KaiABC oscillator complex, which constitutes the main circadian regulator in cyanobacteria. Complex composition changes during the circadian cycle to control KaiC phosphorylation. KaiA stimulates KaiC autophosphorylation, while KaiB sequesters KaiA, leading to KaiC autodephosphorylation. KaiA binding to the KaiC CII domain during the subjective day yields KaiA(2-4):KaiC(6) complexes which stimulate KaiC autophosphorylation. Phospho-Ser-431 KaiC accumulation triggers binding of KaiB during the subjective night to form the KaiB(6):KaiC(6) complex, leading to changes in the output regulators CikA and SasA. KaiB(6):KaiC(6) formation exposes a site for KaiA binding on KaiB that sequesters KaiA from KaiC's CII domain, making the KaiC(6):KaiB(6):KaiA(12) complex resulting in KaiC autodephosphorylation. Complete dephosphorylation of KaiC leads to dissociation of KaiA(2):KaiB(1), completing 1 cycle of the Kai oscillator. Formation of the KaiB:KaiC complex is promoted by KaiA, helping switch KaiC from its autophosphorylation to autodephosphatase function. In terms of biological role, binds oxidized quinones via the N-terminal PsR domain, allowing it to sense redox changes and possibly mediate clock input. This Thermosynechococcus vestitus (strain NIES-2133 / IAM M-273 / BP-1) protein is Circadian clock oscillator protein KaiA.